The primary structure comprises 490 residues: Cytochrome P450 71A19 (490 aa).

Residues 3–23 traverse the membrane as a helical segment; that stretch reads IILVTLCLTTLLALLLLKSIL. A heme-binding site is contributed by cysteine 433.

This sequence belongs to the cytochrome P450 family. The cofactor is heme.

The protein localises to the membrane. This Arabidopsis thaliana (Mouse-ear cress) protein is Cytochrome P450 71A19 (CYP71A19).